The following is a 184-amino-acid chain: Inorganic pyrophosphatase (184 aa).

Positions 19, 33, and 45 each coordinate substrate. 3 residues coordinate Mg(2+): Asp-55, Asp-60, and Asp-92. Tyr-129 is a substrate binding site.

This sequence belongs to the PPase family. Homohexamer. The cofactor is Mg(2+).

It localises to the cytoplasm. It carries out the reaction diphosphate + H2O = 2 phosphate + H(+). In terms of biological role, catalyzes the hydrolysis of inorganic pyrophosphate (PPi) forming two phosphate ions. This is Inorganic pyrophosphatase from Mycoplasma pneumoniae (strain ATCC 29342 / M129 / Subtype 1) (Mycoplasmoides pneumoniae).